The chain runs to 446 residues: Plant intracellular Ras-group-related LRR protein 3 (446 aa).

Positions 65 to 100 form a coiled coil; sequence EACRAVVRLEETHDAYEALLQEAEGRLEAVYRSAME. Residues 101-121 form a disordered region; sequence GKDLEEPDGRDESAAAAAGDD. 10 LRR repeats span residues 138 to 160, 161 to 184, 185 to 207, 208 to 230, 232 to 254, 255 to 277, 279 to 300, 301 to 324, 325 to 347, and 349 to 371; these read GKPVESVRLVDRQLRHLPEAFGR, IQGLRVLDVSRNQLEVIPDAIGGL, DHLEELRLASNALISLPDSIGLL, LNLRILNVGSNRLRSLPDSISKC, SLIELDASYNGLAYLPTNIGYEL, VNLRKLWVHMNKLRSLPSSICEM, SLYLLDAHFNELCGLPSAIGKL, SSLEILNLSSNFSDLKDLPASFGD, LLNLRELDLSNNQIHALPDNFGR, and DKLEKLNLEQNPLSMPPMEIVNK. The short motif at 372–384 is the GVYW element; sequence GVDAVKEYMLQRW.

It belongs to the SHOC2 family. In terms of tissue distribution, widely expressed.

Functionally, leucine-rich repeat protein that likely mediates protein interactions, possibly in the context of signal transduction. The polypeptide is Plant intracellular Ras-group-related LRR protein 3 (IRL3) (Oryza sativa subsp. japonica (Rice)).